A 752-amino-acid polypeptide reads, in one-letter code: Cation-transporting P-type ATPase B (752 aa).

The HMA domain maps to 15–78 (RRIRLDVLGM…VVEKAGYHAA (64 aa)). 2 residues coordinate a metal cation: Cys26 and Cys29. Helical transmembrane passes span 105–125 (LLVA…FAIV), 132–152 (GWGY…AWPF), 167–187 (METL…SSVF), 201–221 (AILN…VFVL), 361–381 (IAGV…AAWL), and 390–410 (AFSV…GLAT). The active-site 4-aspartylphosphate intermediate is the Asp446. 2 consecutive transmembrane segments (helical) span residues 491 to 511 (MAAA…FVAV) and 714 to 734 (AIPI…AMAF).

Belongs to the cation transport ATPase (P-type) (TC 3.A.3) family. Type IB subfamily.

It localises to the cell membrane. It catalyses the reaction ATP + H2O = ADP + phosphate + H(+). The chain is Cation-transporting P-type ATPase B (ctpB) from Mycobacterium tuberculosis (strain ATCC 25618 / H37Rv).